We begin with the raw amino-acid sequence, 228 residues long: Putative adhesin RBE_1271 (228 aa).

An N-terminal signal peptide occupies residues 1–22; the sequence is MKKLLLIAATSATVLSSALSFA.

The polypeptide is Putative adhesin RBE_1271 (Rickettsia bellii (strain RML369-C)).